The sequence spans 571 residues: MSNFFKKLVKKDGTPKSSRKSKSESPVGKYDMNGNQVVPDTASSYSDDSNSLSDSYDKRGEPNIGEQIDTLDDYNFGNEIGDAESAPEDKKSLWKKVGGLVGKDPMSLVSLPVYFFEPLTVLECQLEPLRFVELIEKASTCSDSIDRLMYLTAFNIAVFSSYTRTAKPFNPLLGETFEYIDKQGRYKSFCEQVSHHPPIGIAQTTSEIFDLQQESWITTKFWGNSLDVFSHGQNHLYLNSTGEHFTWKVPSAICHNIIFGKMWIEHYGDLIVENHNTGEKAIINFQKSGWFEGTQRKVQGEILDSKGNARVHINGKWDKYVKAKKHSEGPSRKSSGEITLWEATIEPPENFNKWKHGKWIQGLNEMSKEYQAVLPSTDSRVRMDRIYLEREENKLANKEKNKIEEREREKRKTRESRKEIWKPNYFSKREDSKYGYRWDFNGKYWDERDKRVDSVVDKFKNDPNFDSNKIPEYDDSKLNISVKSVRKFSRDFTNSSTPTQLKRSFSKLKLEEQPQSQSLPPMIKEELSSSTVDHEETFYSESNEAKLESIKEDANSHTYIYSSPTIGHSGR.

Residues M1–D73 are disordered. Residues N33 to A42 are compositionally biased toward polar residues. Over residues S43 to D54 the composition is skewed to low complexity. Positions Y387–I420 form a coiled coil.

This sequence belongs to the OSBP family.

In Dictyostelium discoideum (Social amoeba), this protein is Oxysterol-binding protein 11 (osbK).